The sequence spans 269 residues: tRNA (guanine-N(7)-)-methyltransferase (269 aa).

The tract at residues 1–38 is disordered; the sequence is MDGVNDAANHTVESVPGRPSTASAPLEAGRRSPTGSRL. Residues glutamate 91, glutamate 116, aspartate 143, and aspartate 166 each contribute to the S-adenosyl-L-methionine site. The active site involves aspartate 166. Substrate contacts are provided by residues lysine 170, aspartate 202, and 247-250; that span reads TKFE.

The protein belongs to the class I-like SAM-binding methyltransferase superfamily. TrmB family.

The catalysed reaction is guanosine(46) in tRNA + S-adenosyl-L-methionine = N(7)-methylguanosine(46) in tRNA + S-adenosyl-L-homocysteine. The protein operates within tRNA modification; N(7)-methylguanine-tRNA biosynthesis. In terms of biological role, catalyzes the formation of N(7)-methylguanine at position 46 (m7G46) in tRNA. In Nocardia farcinica (strain IFM 10152), this protein is tRNA (guanine-N(7)-)-methyltransferase.